Here is a 1642-residue protein sequence, read N- to C-terminus: Cholesterol transporter ABCA5 (1642 aa).

A helical transmembrane segment spans residues 32–52 (SVQEILFPLFFLFWLILISMM). The N-linked (GlcNAc...) asparagine glycan is linked to asparagine 86. 6 helical membrane-spanning segments follow: residues 220 to 240 (VILI…AIHI), 264 to 284 (LSWV…MAVI), 297 to 317 (IVIF…ALML), 328 to 348 (GIVE…IILI), 355 to 375 (LVWL…AQVM), and 396 to 416 (LIIT…LAVY). Asparagine 458 is a glycosylation site (N-linked (GlcNAc...) asparagine). An ABC transporter 1 domain is found at 478–713 (IRISGIQKTY…WGIGYRLSMY (236 aa)). 514 to 521 (GHSGTGKS) contacts ATP. 2 helical membrane-spanning segments follow: residues 866 to 886 (LLLL…HHSF) and 967 to 987 (VFAA…VNII). Residue asparagine 996 is glycosylated (N-linked (GlcNAc...) asparagine). 6 helical membrane-spanning segments follow: residues 1021–1041 (LYFQ…YFAM), 1071–1091 (VVDI…LLAF), 1102–1122 (FLAV…FTYI), 1139–1159 (FIYS…FFMG), 1169–1189 (AFCI…FIKI), and 1207–1227 (LSVA…LLQY). The disordered stretch occupies residues 1249–1268 (KSKNRKLPEPPDNEDEDEDV). Acidic residues predominate over residues 1259-1268 (PDNEDEDEDV). Residues 1290-1533 (IMVSNLHKEY…FGKGYFLEIK (244 aa)) form the ABC transporter 2 domain. 1333–1340 (GPNGAGKS) contacts ATP.

It belongs to the ABC transporter superfamily. ABCA family. Post-translationally, N-glycosylated. Ubiquitously expressed. Highly expressed in testis, skeletal muscle, kidney, liver and placenta. Expressed in both the epithelial and mesenchymal compartments, present within the outer root sheath (ORS) of the hair follicle as well as dermal sheath. Expressed in multiple regions of the brain, including the hippocampus, superior frontal and inferior temporal cortices. Strongly expressed in neurons and moderately in microglia, with only weak expression in astrocytes and oligodendrocytes.

It localises to the golgi apparatus membrane. The protein resides in the lysosome membrane. It is found in the late endosome membrane. Its subcellular location is the cell membrane. The catalysed reaction is cholesterol(in) + ATP + H2O = cholesterol(out) + ADP + phosphate + H(+). In terms of biological role, cholesterol efflux transporter in macrophages that is responsible for APOAI/high-density lipoproteins (HDL) formation at the plasma membrane under high cholesterol levels and participates in reverse cholesterol transport. May play a role in the processing of autolysosomes. This chain is Cholesterol transporter ABCA5, found in Homo sapiens (Human).